The following is a 235-amino-acid chain: Uridylate kinase (235 aa).

8 to 11 (KFSG) contacts ATP. The tract at residues 16 to 21 (GAEGYG) is involved in allosteric activation by GTP. Gly50 contacts UMP. ATP-binding residues include Gly51 and Arg55. Residues Asp71 and 132–139 (TGNPYFTT) contribute to the UMP site. ATP contacts are provided by Thr159, Tyr165, and Asp168.

Belongs to the UMP kinase family. In terms of assembly, homohexamer.

The protein localises to the cytoplasm. The catalysed reaction is UMP + ATP = UDP + ADP. The protein operates within pyrimidine metabolism; CTP biosynthesis via de novo pathway; UDP from UMP (UMPK route): step 1/1. Allosterically activated by GTP. Inhibited by UTP. Its function is as follows. Catalyzes the reversible phosphorylation of UMP to UDP. In Aliarcobacter butzleri (strain RM4018) (Arcobacter butzleri), this protein is Uridylate kinase.